A 1331-amino-acid chain; its full sequence is NPC1-like intracellular cholesterol transporter 1 (1331 aa).

The signal sequence occupies residues 1 to 20 (MAAAWLGWLLWALLLSAAQG). At 21–282 (ELYTPKHEAG…RPSFYMGRMP (262 aa)) the chain is on the extracellular side. Intrachain disulfides connect C32/C90, C38/C56, C77/C125, C91/C129, C113/C254, C116/C172, C189/C197, C243/C259, and C256/C263. N-linked (GlcNAc...) asparagine glycans are attached at residues N53 and N85. Residue N138 is glycosylated (N-linked (GlcNAc...) asparagine). N244 carries N-linked (GlcNAc...) asparagine glycosylation. A helical membrane pass occupies residues 283 to 303 (GWLALIIIFTAVFVLLSAVLV). Residues 304-352 (RLRVVSNRNKNKAEGPQEAPKLPHKHKLSPHTILGRFFQNWGTRVASWP) are Cytoplasmic-facing. Residues 353–373 (LTVLALSFIVVIALAAGLTFI) traverse the membrane as a helical segment. Residues 374–632 (ELTTDPVELW…DEINRTTIQD (259 aa)) lie on the Extracellular side of the membrane. 6 N-linked (GlcNAc...) asparagine glycosylation sites follow: N416, N431, N464, N479, N497, and N506. C471 and C485 form a disulfide bridge. C525 and C542 are oxidised to a cystine. N-linked (GlcNAc...) asparagine glycans are attached at residues N606 and N626. An SSD domain is found at 632–797 (DLPVFAVSYI…MTAFVALLSL (166 aa)). The chain crosses the membrane as a helical span at residues 633–653 (LPVFAVSYIIVFLYISLALGS). Topologically, residues 654-665 (YSRCSRVAVESK) are cytoplasmic. A helical membrane pass occupies residues 666–686 (ATLGLGGVIVVLGAVLAAMGF). At 687-696 (YSYLGVPSSL) the chain is on the extracellular side. Residues 697–717 (VIIQVVPFLVLAVGADNIFIF) form a helical membrane-spanning segment. Residues 718 to 742 (VLEYQRLPRMPGEQREAHIGRTLGS) lie on the Cytoplasmic side of the membrane. Residues 743–763 (VAPSMLLCSLSEAICFFLGAL) form a helical membrane-spanning segment. The Extracellular segment spans residues 764 to 776 (TPMPAVRTFALTS). A helical transmembrane segment spans residues 777–797 (GLAIILDFLLQMTAFVALLSL). Residues 798-846 (DSKRQEASRPDVLCCFSTRKLPPPKEKEGLLLRFFRKIYAPFLLHRFIR) are Cytoplasmic-facing. The helical transmembrane segment at 847-867 (PVVMLLFLTLFGANLYLMCNI) threads the bilayer. Residues 868 to 1113 (NVGLDQELAL…QQYLTVLPEG (246 aa)) are Extracellular-facing. Residues N909 and N917 are each glycosylated (N-linked (GlcNAc...) asparagine). Cystine bridges form between C920-C925, C967-C1025, and C981-C990. 3 N-linked (GlcNAc...) asparagine glycosylation sites follow: N996, N1038, and N1076. Residues 1114–1134 (IFTLALCFVPTFVVCYLLLGL) form a helical membrane-spanning segment. The Cytoplasmic portion of the chain corresponds to 1135-1142 (DMCSGILN). A helical transmembrane segment spans residues 1143–1163 (LLSIIMILVDTIGLMAVWGIS). Residues 1164–1165 (YN) are Extracellular-facing. The chain crosses the membrane as a helical span at residues 1166–1186 (AVSLINLVTAVGMSVEFVSHI). The Cytoplasmic portion of the chain corresponds to 1187–1206 (TRSFAVSTKPTRLERAKDAT). Residues 1207-1227 (VFMGSAVFAGVAMTNFPGILI) form a helical membrane-spanning segment. At 1228 to 1242 (LGFAQAQLIQIFFFR) the chain is on the extracellular side. Residues 1243 to 1263 (LNLLITLLGLLHGLVFLPVVL) form a helical membrane-spanning segment. The Cytoplasmic portion of the chain corresponds to 1264–1331 (SYLGPDVNQA…SSLPKSDQKF (68 aa)).

This sequence belongs to the patched family. Interacts with RAB11A, MYO5B and RAB11FIP2. Interaction with RAB11A, MYO5B and RAB11FIP2 is required for proper transport to the plasma membrane upon cholesterol depletion. Interacts with NPC2. Interacts with LIMA1. Highly glycosylated. Small intestine showed the highest level of expression. Expression in other tissues including gall bladder, liver, testis and stomach is also observed. Along the duodenum-ileum axis, the levels vary in different segments of the intestine with peak expression in the proximal jejunum. Protein expression is confined to the enterocyte. Discrete localization to the epithelial layer bordering the luminal space along the crypt-villus axis. Protein expression in the enterocyte is observed closest to the luminal space. Expression in enterocytes from the proximal (jejunum) but not in the distal (ileum) region.

Its subcellular location is the apical cell membrane. The protein localises to the cell membrane. It catalyses the reaction cholesterol(in) = cholesterol(out). It carries out the reaction sitosterol(out) = sitosterol(in). Its function is as follows. Plays a major role in cholesterol homeostasis. Critical for the uptake of cholesterol across the plasma membrane of the intestinal enterocyte. Involved in plant sterol absorption, it transports sitosterol, although at lower rates than cholesterol. Is the direct molecular target of ezetimibe, a drug that inhibits cholesterol absorption and is approved for the treatment of hypercholesterolemia. May have a function in the transport of multiple lipids and their homeostasis, thereby influencing lipid metabolism regulation. May be involved in caveolin trafficking from the plasma membrane. Acts as a negative regulator of NPC2 and down-regulates its expression and secretion by inhibiting its maturation and accelerating its degradation. The chain is NPC1-like intracellular cholesterol transporter 1 from Rattus norvegicus (Rat).